The sequence spans 290 residues: Pyridoxal kinase PdxY (290 aa).

Substrate-binding positions include Ser12 and 47–48 (TQ). ATP-binding positions include Asp114, Glu151, Lys184, and 211–214 (RPLL). Residue Asp225 coordinates substrate.

Belongs to the pyridoxine kinase family. PdxY subfamily. As to quaternary structure, homodimer. It depends on Mg(2+) as a cofactor.

It catalyses the reaction pyridoxal + ATP = pyridoxal 5'-phosphate + ADP + H(+). It functions in the pathway cofactor metabolism; pyridoxal 5'-phosphate salvage; pyridoxal 5'-phosphate from pyridoxal: step 1/1. Functionally, pyridoxal kinase involved in the salvage pathway of pyridoxal 5'-phosphate (PLP). Catalyzes the phosphorylation of pyridoxal to PLP. The sequence is that of Pyridoxal kinase PdxY from Pseudomonas putida (strain W619).